The chain runs to 170 residues: Lipoprotein signal peptidase (170 aa).

3 helical membrane-spanning segments follow: residues 5–25, 70–90, and 98–118; these read VYHQ…LDQG, WFFT…ICRV, and AFAL…RIIH. Active-site residues include Asp-123 and Asp-141. The helical transmembrane segment at 137 to 157 threads the bilayer; sequence FNLADAAISLGAMVLIADLFI.

Belongs to the peptidase A8 family.

The protein resides in the cell inner membrane. The enzyme catalyses Release of signal peptides from bacterial membrane prolipoproteins. Hydrolyzes -Xaa-Yaa-Zaa-|-(S,diacylglyceryl)Cys-, in which Xaa is hydrophobic (preferably Leu), and Yaa (Ala or Ser) and Zaa (Gly or Ala) have small, neutral side chains.. It participates in protein modification; lipoprotein biosynthesis (signal peptide cleavage). Functionally, this protein specifically catalyzes the removal of signal peptides from prolipoproteins. The polypeptide is Lipoprotein signal peptidase (Cellvibrio japonicus (strain Ueda107) (Pseudomonas fluorescens subsp. cellulosa)).